Reading from the N-terminus, the 100-residue chain is Urease subunit gamma (100 aa).

It belongs to the urease gamma subunit family. As to quaternary structure, heterotrimer of UreA (gamma), UreB (beta) and UreC (alpha) subunits. Three heterotrimers associate to form the active enzyme.

Its subcellular location is the cytoplasm. It catalyses the reaction urea + 2 H2O + H(+) = hydrogencarbonate + 2 NH4(+). The protein operates within nitrogen metabolism; urea degradation; CO(2) and NH(3) from urea (urease route): step 1/1. The sequence is that of Urease subunit gamma from Agrobacterium fabrum (strain C58 / ATCC 33970) (Agrobacterium tumefaciens (strain C58)).